The primary structure comprises 456 residues: Phosphomannomutase (456 aa).

Ser-98 serves as the catalytic Phosphoserine intermediate. Mg(2+) contacts are provided by Ser-98, Asp-245, Asp-247, and Asp-249.

It belongs to the phosphohexose mutase family. The cofactor is Mg(2+).

It carries out the reaction alpha-D-mannose 1-phosphate = D-mannose 6-phosphate. It functions in the pathway nucleotide-sugar biosynthesis; GDP-alpha-D-mannose biosynthesis; alpha-D-mannose 1-phosphate from D-fructose 6-phosphate: step 2/2. It participates in bacterial outer membrane biogenesis; LPS O-antigen biosynthesis. In terms of biological role, involved in GDP-mannose biosynthesis which serves as the activated sugar nucleotide precursor for mannose residues in cell surface polysaccharides. This enzyme participates in synthesis of the LPS O antigen. The sequence is that of Phosphomannomutase (manB) from Salmonella montevideo.